The following is a 113-amino-acid chain: Stigma/stylar cysteine-rich adhesin (113 aa).

An N-terminal signal peptide occupies residues 1-22 (MARSSAVCFLLLLAFLIGTASA). 4 disulfides stabilise this stretch: Cys25-Cys72, Cys35-Cys49, Cys50-Cys95, and Cys70-Cys109.

It belongs to the plant LTP family. In terms of tissue distribution, highly expressed in style and stigma, abundant in young leaves and petals, and low expression in young anthers at pollen mother cell stage with an active tapetum. Not expressed in mature leaves or in pollen grains or tubes. Found in the stylar transmitting tract epidermis and in the stylar extracellular matrix.

Its function is as follows. Acts as an adhesive agent between the pollen tube wall and the stylar transmitting tract epidermis. Binds a stylar pectin in a pH-dependent manner. Enhances activity of chemocyanin, a diffusible chemotropic factor. The polypeptide is Stigma/stylar cysteine-rich adhesin (SCA) (Lilium longiflorum (Trumpet lily)).